We begin with the raw amino-acid sequence, 333 residues long: FAD-dependent monooxygenase pytG (333 aa).

Residues 6–26 traverse the membrane as a helical segment; the sequence is LPNVSVAIIGAGIGGLTLGAF. Positions 38 and 109 each coordinate FAD. Asn303 carries an N-linked (GlcNAc...) asparagine glycan.

This sequence belongs to the paxM FAD-dependent monooxygenase family. Requires FAD as cofactor.

The protein localises to the membrane. Its pathway is secondary metabolite biosynthesis. Its function is as follows. FAD-dependent monooxygenase; part of the gene cluster that mediates the biosynthesis of pyranterreones, a family of antioxidative compounds. The first step of pyranonigrins biosynthesis is performed by the hybrid PKS-NRPS synthetase pytA that condenses 4 malonyl-CoA units ato the acetyl starter unit by the modular PKS of pytA. The acyl chain is then connected to an L-serine through the amide bond by the modular NRPS of pytA. A tetramic acid is formed and released from the PKS-NRPS pytA to give pyranterreone 5 with the help of the thioesterase pytI. Pyranterreone 5 could be methylated by pytC to afford pyranterreone 6. Both pyranterreones 5 and 6 are subsequently oxidized by the FAD-linked oxidoreductase pytB and the cytochrome P450 monooxygenase pytD to form the fused gamma-pyrone core, resulting in pyranterreones 7 and 11, respectively. The hydroxy group at C-8 of pyranterreones 7 and 11 are dehydrated by the aspartyl protease pytH to form a delta-7 double bond to give pyranterreones 3 and 1, 2 accordingly. The exo-methylene of pyranterreone 3 could be reduced into a pendant methyl by reductase pytE to provide pyranterreone 4, also known as cordylactam. Pyranterreone 4 can be reconverted to pyranterreone 3 through pytB-catalyzed dehydrogenation or further oxidized to pyranterreones 9 and 10. The polypeptide is FAD-dependent monooxygenase pytG (Aspergillus terreus (strain NIH 2624 / FGSC A1156)).